A 152-amino-acid chain; its full sequence is Membrane-spanning 4-domains subfamily A member 13 (152 aa).

The next 4 helical transmembrane spans lie at 1–21 (MIGI…MGQI), 32–52 (TYKT…VFLI), 66–86 (TLII…LTII), and 111–131 (ILLF…IYSC).

This sequence belongs to the MS4A family.

The protein localises to the membrane. Functionally, may be involved in signal transduction as a component of a multimeric receptor complex. The chain is Membrane-spanning 4-domains subfamily A member 13 (MS4A13) from Homo sapiens (Human).